Consider the following 396-residue polypeptide: Pyruvate synthase subunit PorA (396 aa).

As to quaternary structure, heterotetramer of one alpha, one beta, one delta and one gamma chain.

The enzyme catalyses 2 oxidized [2Fe-2S]-[ferredoxin] + pyruvate + CoA = 2 reduced [2Fe-2S]-[ferredoxin] + acetyl-CoA + CO2 + H(+). The polypeptide is Pyruvate synthase subunit PorA (porA) (Pyrococcus furiosus (strain ATCC 43587 / DSM 3638 / JCM 8422 / Vc1)).